Consider the following 297-residue polypeptide: Light-independent protochlorophyllide reductase iron-sulfur ATP-binding protein (297 aa).

ATP is bound by residues 41 to 46 and Lys-70; that span reads GIGKST. Ser-45 contacts Mg(2+). Cys-126 and Cys-160 together coordinate [4Fe-4S] cluster. Residues 211–212 and 235–237 contribute to the ATP site; these read NR and PDL.

Belongs to the NifH/BchL/ChlL family. As to quaternary structure, homodimer. Protochlorophyllide reductase is composed of three subunits; BchL, BchN and BchB. It depends on [4Fe-4S] cluster as a cofactor.

The enzyme catalyses chlorophyllide a + oxidized 2[4Fe-4S]-[ferredoxin] + 2 ADP + 2 phosphate = protochlorophyllide a + reduced 2[4Fe-4S]-[ferredoxin] + 2 ATP + 2 H2O. It participates in porphyrin-containing compound metabolism; bacteriochlorophyll biosynthesis (light-independent). Component of the dark-operative protochlorophyllide reductase (DPOR) that uses Mg-ATP and reduced ferredoxin to reduce ring D of protochlorophyllide (Pchlide) to form chlorophyllide a (Chlide). This reaction is light-independent. The L component serves as a unique electron donor to the NB-component of the complex, and binds Mg-ATP. This is Light-independent protochlorophyllide reductase iron-sulfur ATP-binding protein from Cereibacter sphaeroides (strain ATCC 17025 / ATH 2.4.3) (Rhodobacter sphaeroides).